The following is a 564-amino-acid chain: Heat shock factor protein 2 (564 aa).

Residues 21–126 (VPAFLSKLWA…LLEHIKRKVS (106 aa)) mediate DNA binding. Positions 133–206 (NKISQEDLSK…VTLVQNNQLV (74 aa)) are hydrophobic repeat HR-A/B. Positions 271-280 (EENTMVDEEN) are enriched in acidic residues. Disordered regions lie at residues 271 to 301 (EENT…CSRS) and 320 to 347 (QGDK…SPLM). The hydrophobic repeat HR-C stretch occupies residues 390–415 (LLDYLDSIDCSLEDFQAMLSGRQFSI). Polar residues predominate over residues 448–465 (TTKSNAGPAASQETQVSK). The segment at 448-468 (TTKSNAGPAASQETQVSKPKS) is disordered.

Belongs to the HSF family. As to quaternary structure, homotrimer. Expressed in most tissues with the exceptions of blood and liver.

The protein resides in the cytoplasm. It localises to the nucleus. DNA-binding protein that specifically binds heat shock promoter elements (HSE) and activates transcription. HSF2 shows constitutive DNA binding activity, even without heat shock. This Gallus gallus (Chicken) protein is Heat shock factor protein 2 (HSF2).